The sequence spans 791 residues: Endonuclease MutS2 (791 aa).

337–344 (GPNTGGKT) contacts ATP. The interval 689–715 (AAQASQKKPEKSVRSSRGLRSSRASSE) is disordered. Low complexity predominate over residues 703–713 (SSRGLRSSRAS). Positions 716–791 (LDLRGQRYEE…GTGATIVNLQ (76 aa)) constitute a Smr domain.

It belongs to the DNA mismatch repair MutS family. MutS2 subfamily. As to quaternary structure, homodimer. Binds to stalled ribosomes, contacting rRNA.

Functionally, endonuclease that is involved in the suppression of homologous recombination and thus may have a key role in the control of bacterial genetic diversity. Acts as a ribosome collision sensor, splitting the ribosome into its 2 subunits. Detects stalled/collided 70S ribosomes which it binds and splits by an ATP-hydrolysis driven conformational change. Acts upstream of the ribosome quality control system (RQC), a ribosome-associated complex that mediates the extraction of incompletely synthesized nascent chains from stalled ribosomes and their subsequent degradation. Probably generates substrates for RQC. The sequence is that of Endonuclease MutS2 from Lactobacillus gasseri (strain ATCC 33323 / DSM 20243 / BCRC 14619 / CIP 102991 / JCM 1131 / KCTC 3163 / NCIMB 11718 / NCTC 13722 / AM63).